The primary structure comprises 613 residues: Oxidoreductase GME11365 (613 aa).

3 Plastocyanin-like domains span residues isoleucine 72–serine 188, proline 198–glycine 331, and valine 431–serine 571.

This sequence belongs to the multicopper oxidase family.

The protein operates within secondary metabolite biosynthesis. Its function is as follows. Oxidoreductase; part of the gene cluster that mediates the biosynthesis of dibenzodioxocinones such as pestalotiollide B, a novel class of inhibitors against cholesterol ester transfer protein (CEPT). The biosynthesis initiates from condensation of acetate and malonate units catalyzed by the non-reducing PKS pks8/GME11356. Pks8/GME11356 lacks a thioesterase (TE) domain, which is important to the cyclizing of the third ring of atrochrysone carboxylic acid, and the esterase GME11355 might play the role of TE and catalyzes the cyclization reaction of the C ring. The lactamase-like protein GME11357 (or other beta-lactamases in Pestalotiopsis microspora) probably hydrolyzes the thioester bond between the ACP of pks8/GME11356 and the intermediate to release atrochrysone carboxylic acid, which is spontaneously dehydrates to form endocrocin anthrone. Endocrocin anthrone is further converted to emodin via the endocrocin intermediate. Emodin is then oxidized by several enzymes such as the Baeyer-Villiger oxidase GME11358, the oxidoreductase GME11367, the short chain dehydrogenase/reductase GME11373, as well as by other oxidoreductases from the cluster, to modify the A and C rings and open the B ring, and finally yield monodictyphenone. The prenyltransferase GME11375 may catalyze the addition reaction between the C5 side chains and the carbon bone of dibenzodioxocinones. The remaining biochemical reactions to the final product dibenzodioxocinones should be methylation catalyzed by methyltransferase GME11366 and reduction and lactonization reaction catalyzed by a series of oxidordeuctases. The polypeptide is Oxidoreductase GME11365 (Pestalotiopsis microspora).